Consider the following 634-residue polypeptide: AAl-toxin cluster-specific transcription factor ALT13 (634 aa).

Positions 30–56 (CENCKRRKVRCSGANPCEQCLKVNVHC) form a DNA-binding region, zn(2)-C6 fungal-type. A disordered region spans residues 66-89 (RRSVPNSGADKNNQQGDTDRHNGA). Over residues 69–81 (VPNSGADKNNQQG) the composition is skewed to polar residues.

It is found in the nucleus. Its function is as follows. Transcription factor that regulates the expression of the gene cluster that mediates the biosynthesis of AAL-toxins, sphinganine-analog mycotoxins responsible for Alternaria stem canker on tomato by the tomato pathotype. The polypeptide is AAl-toxin cluster-specific transcription factor ALT13 (Alternaria alternata (Alternaria rot fungus)).